Reading from the N-terminus, the 139-residue chain is Cytochrome c-type biogenesis protein CcmE (139 aa).

The Cytoplasmic segment spans residues 1-7 (MTKRQNR). The helical; Signal-anchor for type II membrane protein transmembrane segment at 8 to 28 (MTLVALLVIGVSLTGYLGLKA) threads the bilayer. At 29 to 139 (FNENLLYFFS…ADALEKAKNK (111 aa)) the chain is on the periplasmic side. Positions 120 and 124 each coordinate heme.

This sequence belongs to the CcmE/CycJ family.

It is found in the cell inner membrane. Its function is as follows. Heme chaperone required for the biogenesis of c-type cytochromes. Transiently binds heme delivered by CcmC and transfers the heme to apo-cytochromes in a process facilitated by CcmF and CcmH. The chain is Cytochrome c-type biogenesis protein CcmE from Ruthia magnifica subsp. Calyptogena magnifica.